Reading from the N-terminus, the 447-residue chain is Pyruvate kinase (447 aa).

Position 33 (arginine 33) interacts with substrate. Residues asparagine 35, serine 37, and aspartate 61 each contribute to the K(+) site. ATP is bound at residue asparagine 35 to histidine 38. Arginine 68 serves as a coordination point for ATP. Glutamate 203 serves as a coordination point for Mg(2+). 3 residues coordinate substrate: glycine 226, aspartate 227, and threonine 259. Aspartate 227 serves as a coordination point for Mg(2+).

It belongs to the pyruvate kinase family. Homotetramer. Mg(2+) serves as cofactor. The cofactor is K(+).

It carries out the reaction pyruvate + ATP = phosphoenolpyruvate + ADP + H(+). Its pathway is carbohydrate degradation; glycolysis; pyruvate from D-glyceraldehyde 3-phosphate: step 5/5. This is Pyruvate kinase from Methanocaldococcus jannaschii (strain ATCC 43067 / DSM 2661 / JAL-1 / JCM 10045 / NBRC 100440) (Methanococcus jannaschii).